Here is a 128-residue protein sequence, read N- to C-terminus: Prefoldin subunit 1 (128 aa).

2 coiled-coil regions span residues 17 to 37 (MIELTGKLKQVQNQMRNKEGD) and 81 to 115 (LKDSEAAVASLQTSKEYLEKQVAEVENNLRELLQQ).

This sequence belongs to the prefoldin subunit beta family. Heterohexamer of two PFD-alpha type and four PFD-beta type subunits forming prefoldin co-chaperone complex. Interacts with LSM8, a specific subunit of the LSM2-8 complex, which is a core component of the spliceosome.

Its subcellular location is the cytoplasm. The protein resides in the nucleus. In terms of biological role, binds specifically to cytosolic chaperonin (c-CPN) and transfers target proteins to it. Binds to nascent polypeptide chain and promotes folding in an environment in which there are many competing pathways for nonnative proteins. Together with other chaperonins, contribute to the regulation of gene expression by modulating the spliceosome function on pre-mRNA splicing post-transcriptionally by acting as a co-chaperone of Hsp90 to control levels of LSM8. Required for microtubules (MTs) organization and dynamicity. Involved in the process leading to microtubules dissociation in response to gibberellic acid (GA) probably due to the DELLA proteins-mediated translocation of the prefoldin co-chaperone complex from the cytoplasm to the nucleus. In Arabidopsis thaliana (Mouse-ear cress), this protein is Prefoldin subunit 1.